The chain runs to 223 residues: Small ribosomal subunit protein uS3 (223 aa).

The KH type-2 domain occupies 38–106 (IRKFLDEKLK…QVHINIVEIK (69 aa)).

The protein belongs to the universal ribosomal protein uS3 family. As to quaternary structure, part of the 30S ribosomal subunit. Forms a tight complex with proteins S10 and S14.

Binds the lower part of the 30S subunit head. Binds mRNA in the 70S ribosome, positioning it for translation. This Lactobacillus delbrueckii subsp. bulgaricus (strain ATCC 11842 / DSM 20081 / BCRC 10696 / JCM 1002 / NBRC 13953 / NCIMB 11778 / NCTC 12712 / WDCM 00102 / Lb 14) protein is Small ribosomal subunit protein uS3.